A 181-amino-acid chain; its full sequence is NADH-quinone oxidoreductase subunit B (181 aa).

[4Fe-4S] cluster-binding residues include Cys-45, Cys-46, Cys-111, and Cys-140.

This sequence belongs to the complex I 20 kDa subunit family. NDH-1 is composed of 14 different subunits. Subunits NuoB, C, D, E, F, and G constitute the peripheral sector of the complex. It depends on [4Fe-4S] cluster as a cofactor.

It is found in the cell inner membrane. It carries out the reaction a quinone + NADH + 5 H(+)(in) = a quinol + NAD(+) + 4 H(+)(out). In terms of biological role, NDH-1 shuttles electrons from NADH, via FMN and iron-sulfur (Fe-S) centers, to quinones in the respiratory chain. The immediate electron acceptor for the enzyme in this species is believed to be a menaquinone. Couples the redox reaction to proton translocation (for every two electrons transferred, four hydrogen ions are translocated across the cytoplasmic membrane), and thus conserves the redox energy in a proton gradient. This Flavobacterium psychrophilum (strain ATCC 49511 / DSM 21280 / CIP 103535 / JIP02/86) protein is NADH-quinone oxidoreductase subunit B.